We begin with the raw amino-acid sequence, 86 residues long: uncharacterized protein (86 aa).

A signal peptide spans 1-22; the sequence is MKTINTVVAAMALSTLSFGVFA.

The protein belongs to the BhsA/McbA family.

It is found in the periplasm. This is an uncharacterized protein from Escherichia coli O6:H1 (strain CFT073 / ATCC 700928 / UPEC).